Reading from the N-terminus, the 57-residue chain is uncharacterized protein (57 aa).

Residues 1–57 are disordered; that stretch reads MDDTLPKQMTPTDTSPLKEEQAHCNNKTLENQPKNINDNKCTDSQNTDLQNTEPSKV. Positions 23–57 are enriched in polar residues; sequence HCNNKTLENQPKNINDNKCTDSQNTDLQNTEPSKV.

This is an uncharacterized protein from Ornithodoros (relapsing fever ticks).